We begin with the raw amino-acid sequence, 216 residues long: Sugar fermentation stimulation protein homolog (216 aa).

Belongs to the SfsA family.

This Thermoplasma volcanium (strain ATCC 51530 / DSM 4299 / JCM 9571 / NBRC 15438 / GSS1) protein is Sugar fermentation stimulation protein homolog.